We begin with the raw amino-acid sequence, 860 residues long: Probable beta-glucosidase A (860 aa).

A signal peptide spans Met1–Ala19. Asn61, Asn211, and Asn252 each carry an N-linked (GlcNAc...) asparagine glycan. Residue Asp280 is part of the active site. Asn315, Asn322, Asn354, Asn387, Asn442, Asn523, Asn542, Asn564, Asn658, Asn690, and Asn712 each carry an N-linked (GlcNAc...) asparagine glycan.

It belongs to the glycosyl hydrolase 3 family.

Its subcellular location is the secreted. It catalyses the reaction Hydrolysis of terminal, non-reducing beta-D-glucosyl residues with release of beta-D-glucose.. Its pathway is glycan metabolism; cellulose degradation. Functionally, beta-glucosidases are one of a number of cellulolytic enzymes involved in the degradation of cellulosic biomass. Catalyzes the last step releasing glucose from the inhibitory cellobiose. This Aspergillus niger (strain ATCC MYA-4892 / CBS 513.88 / FGSC A1513) protein is Probable beta-glucosidase A (bglA).